A 58-amino-acid polypeptide reads, in one-letter code: MSPQTETKAMVGFKAGVKDYKLTYYTPDYETKDTDILAAFRVTPQPGVPPEEAGAAVA.

Residues 1–2 (MS) constitute a propeptide that is removed on maturation. Pro-3 is modified (N-acetylproline). Lys-14 is modified (N6,N6,N6-trimethyllysine).

This sequence belongs to the RuBisCO large chain family. Type I subfamily. Heterohexadecamer of 8 large chains and 8 small chains.

It is found in the plastid. The protein resides in the chloroplast. The catalysed reaction is 2 (2R)-3-phosphoglycerate + 2 H(+) = D-ribulose 1,5-bisphosphate + CO2 + H2O. It carries out the reaction D-ribulose 1,5-bisphosphate + O2 = 2-phosphoglycolate + (2R)-3-phosphoglycerate + 2 H(+). In terms of biological role, ruBisCO catalyzes two reactions: the carboxylation of D-ribulose 1,5-bisphosphate, the primary event in carbon dioxide fixation, as well as the oxidative fragmentation of the pentose substrate in the photorespiration process. Both reactions occur simultaneously and in competition at the same active site. The chain is Ribulose bisphosphate carboxylase large chain (rbcL) from Euonymus maackii (Maack's spindle tree).